A 288-amino-acid polypeptide reads, in one-letter code: UPF0494 membrane protein C212.04c (288 aa).

Helical transmembrane passes span 107–127 (WVLL…KFKI), 144–164 (IWGP…AFNY), 174–194 (PLIS…SVII), and 198–218 (IAGV…GVIA).

Belongs to the UPF0494 family.

Its subcellular location is the cytoplasm. The protein resides in the endoplasmic reticulum. The protein localises to the membrane. The protein is UPF0494 membrane protein C212.04c of Schizosaccharomyces pombe (strain 972 / ATCC 24843) (Fission yeast).